A 363-amino-acid polypeptide reads, in one-letter code: NAD-dependent epimerase/dehydratase tndE (363 aa).

A helical transmembrane segment spans residues 10-30 (GLVLITGVNGFLASHLALQLI). An NADP(+)-binding site is contributed by tyrosine 176.

It belongs to the NAD(P)-dependent epimerase/dehydratase family. Dihydroflavonol-4-reductase subfamily.

It localises to the membrane. The protein operates within secondary metabolite biosynthesis; terpenoid biosynthesis. Its function is as follows. NAD-dependent epimerase/dehydratase; part of the gene cluster that mediates the biosynthesis of talaronoid C, a fusicoccane diterpenoid with an unprecedented tricyclic 5/8/6 ring system. The first step in the pathway is performed by the fusicoccadiene synthase tndC that possesses both prenyl transferase and terpene cyclase activity, converting isopentenyl diphosphate and dimethylallyl diphosphate into geranylgeranyl diphosphate (GGDP) and further converting GGDP into talarodiene, a precursor for talaronoid C. The remaining enzymes from the cluster include the cytochrome P450 monooxygenase tndB, the aldehyde reductase tndE and the alcohol dehydrogenase tndF that are involved in the conversion of talarodiene into talaronoid C. In Aspergillus flavipes, this protein is NAD-dependent epimerase/dehydratase tndE.